Here is a 315-residue protein sequence, read N- to C-terminus: MSLCSPTHSAEMSLFLQGPEEMLPLSSEGSEMGSEKEQSPEPHLPEEGEGGKPWRVDDSEGSWIPPGEKEHGQESLSDELQETHPKKPWQKVTVRARELGDPIAHPRHEADEKPFICAQCGKTFNNTSNLRTHQRIHTGEKPYKCSECGKSFSRSSNRIRHERIHLEEKHYKCPKCQESFRRRSDLTTHQQDHLGKRPYRCDICGKSFSQSATLAVHHRTHLEPAPYICCECGKSFSNSSSFGVHHRTHTGERPYECTECGRTFSDISNFGAHQRTHRGEKPYRCTVCGKHFSRSSNLIRHQKTHLGEQAGKDSS.

Residues 1 to 10 show a composition bias toward polar residues; the sequence is MSLCSPTHSA. A disordered region spans residues 1-90; the sequence is MSLCSPTHSA…QETHPKKPWQ (90 aa). The segment covering 33-58 has biased composition (basic and acidic residues); sequence GSEKEQSPEPHLPEEGEGGKPWRVDD. S39, S75, and S77 each carry phosphoserine. K113 participates in a covalent cross-link: Glycyl lysine isopeptide (Lys-Gly) (interchain with G-Cter in SUMO2). 7 consecutive C2H2-type zinc fingers follow at residues 115-137, 143-165, 171-193, 199-221, 227-249, 255-277, and 283-305; these read FICA…QRIH, YKCS…ERIH, YKCP…QQDH, YRCD…HRTH, YICC…HRTH, YECT…QRTH, and YRCT…QKTH.

It belongs to the krueppel C2H2-type zinc-finger protein family.

It localises to the nucleus. In terms of biological role, may be involved in transcriptional regulation. The protein is Zinc finger protein 691 (ZNF691) of Homo sapiens (Human).